A 517-amino-acid polypeptide reads, in one-letter code: Ribose import ATP-binding protein RbsA 1 (517 aa).

ABC transporter domains are found at residues Leu11–Asp251 and Tyr263–Thr507. Gly43–Ser50 contributes to the ATP binding site.

It belongs to the ABC transporter superfamily. Ribose importer (TC 3.A.1.2.1) family. In terms of assembly, the complex is composed of an ATP-binding protein (RbsA), two transmembrane proteins (RbsC) and a solute-binding protein (RbsB).

It is found in the cell inner membrane. The enzyme catalyses D-ribose(out) + ATP + H2O = D-ribose(in) + ADP + phosphate + H(+). Its function is as follows. Part of the ABC transporter complex RbsABC involved in ribose import. Responsible for energy coupling to the transport system. The protein is Ribose import ATP-binding protein RbsA 1 of Burkholderia ambifaria (strain ATCC BAA-244 / DSM 16087 / CCUG 44356 / LMG 19182 / AMMD) (Burkholderia cepacia (strain AMMD)).